Consider the following 439-residue polypeptide: Chitinase-like protein Idgf1 (439 aa).

An N-terminal signal peptide occupies residues methionine 1–alanine 20. The GH18 domain maps to serine 22–glycine 439. A disulfide bridge links cysteine 26 with cysteine 53. N-linked (GlcNAc...) asparagine glycosylation is found at asparagine 122, asparagine 218, and asparagine 346. An intrachain disulfide couples cysteine 340 to cysteine 423.

Belongs to the glycosyl hydrolase 18 family. IDGF subfamily. In terms of tissue distribution, primarily expressed in yolk cells and fat body. In larvae, it is expressed in large salivary gland cells and weakly expressed in imaginal disks. Less expressed than Idgf2 and Idgf4.

It is found in the secreted. Its function is as follows. Cooperates with insulin-like peptides to stimulate the proliferation, polarization and motility of imaginal disk cells. May act by stabilizing the binding of insulin-like peptides to its receptor through a simultaneous interaction with both molecules to form a multiprotein signaling complex. This Drosophila melanogaster (Fruit fly) protein is Chitinase-like protein Idgf1 (Idgf1).